The following is a 367-amino-acid chain: tRNA uridine(34) hydroxylase (367 aa).

Residues 159–253 (EDENSIVVDV…YAHEVSQKGL (95 aa)) enclose the Rhodanese domain. Cys-213 serves as the catalytic Cysteine persulfide intermediate.

Belongs to the TrhO family.

It catalyses the reaction uridine(34) in tRNA + AH2 + O2 = 5-hydroxyuridine(34) in tRNA + A + H2O. In terms of biological role, catalyzes oxygen-dependent 5-hydroxyuridine (ho5U) modification at position 34 in tRNAs. This chain is tRNA uridine(34) hydroxylase, found in Leptospira interrogans serogroup Icterohaemorrhagiae serovar Lai (strain 56601).